The primary structure comprises 90 residues: Darcynin 1 (90 aa).

The protein belongs to the darcynin family.

This is Darcynin 1 from Acinetobacter baumannii (strain ATCC 17978 / DSM 105126 / CIP 53.77 / LMG 1025 / NCDC KC755 / 5377).